The chain runs to 79 residues: DNA-directed RNA polymerase subunit omega (79 aa).

The protein belongs to the RNA polymerase subunit omega family. The RNAP catalytic core consists of 2 alpha, 1 beta, 1 beta' and 1 omega subunit. When a sigma factor is associated with the core the holoenzyme is formed, which can initiate transcription.

The enzyme catalyses RNA(n) + a ribonucleoside 5'-triphosphate = RNA(n+1) + diphosphate. Promotes RNA polymerase assembly. Latches the N- and C-terminal regions of the beta' subunit thereby facilitating its interaction with the beta and alpha subunits. The protein is DNA-directed RNA polymerase subunit omega of Kosmotoga olearia (strain ATCC BAA-1733 / DSM 21960 / TBF 19.5.1).